The sequence spans 256 residues: Triosephosphate isomerase (256 aa).

Residue 9-11 (NWK) coordinates substrate. Residue H97 is the Electrophile of the active site. E169 serves as the catalytic Proton acceptor. Substrate-binding positions include G175, S214, and 235–236 (GG).

Belongs to the triosephosphate isomerase family. In terms of assembly, homodimer.

The protein resides in the cytoplasm. The enzyme catalyses D-glyceraldehyde 3-phosphate = dihydroxyacetone phosphate. It participates in carbohydrate biosynthesis; gluconeogenesis. It functions in the pathway carbohydrate degradation; glycolysis; D-glyceraldehyde 3-phosphate from glycerone phosphate: step 1/1. Its function is as follows. Involved in the gluconeogenesis. Catalyzes stereospecifically the conversion of dihydroxyacetone phosphate (DHAP) to D-glyceraldehyde-3-phosphate (G3P). This is Triosephosphate isomerase from Aliivibrio salmonicida (strain LFI1238) (Vibrio salmonicida (strain LFI1238)).